The following is a 225-amino-acid chain: MNGYFFSFEGPEGAGKTTMIGKLESFLRERGFDVMVTREPGGVRIAEAIRALILNREYTEMDGRTEALLYAAARRQHLLEKIVPALEAGRVVLCDRFVDSSLAYQGFARGLGVEEVWKINEFAIDGYMPSLTVYFDIDPQIGLERIRQNREREVNRLDLETLSFHDKVREGYRKLAKRFAERIVVIDASRPLDDVFSETVATVLSRLEGSKRHFHESNRDDSCWT.

10-17 (GPEGAGKT) lines the ATP pocket.

The protein belongs to the thymidylate kinase family.

The enzyme catalyses dTMP + ATP = dTDP + ADP. In terms of biological role, phosphorylation of dTMP to form dTDP in both de novo and salvage pathways of dTTP synthesis. The protein is Thymidylate kinase of Geobacillus thermodenitrificans (strain NG80-2).